Reading from the N-terminus, the 362-residue chain is Caveolae-associated protein 4 (362 aa).

A disordered region spans residues 1-24; that stretch reads MEHNGSASNAGKIHQNRLSSVTED. Positions 100 to 120 form a coiled coil; that stretch reads IKDVKARVEKQQVRVTKVETK. Serine 152, serine 171, and serine 172 each carry phosphoserine. 3 stretches are compositionally biased toward basic and acidic residues: residues 230–255, 275–289, and 305–320; these read RERL…ERFK, KAKD…VDRG, and HEFH…KEVT. 2 disordered regions span residues 230 to 289 and 305 to 346; these read RERL…VDRG and HEFH…KPQV. Phosphotyrosine is present on tyrosine 324. The residue at position 334 (threonine 334) is a Phosphothreonine. Phosphoserine is present on serine 353.

The protein belongs to the CAVIN family. As to quaternary structure, component of the CAVIN complex composed of CAVIN1, CAVIN2, CAVIN3 and CAVIN4. Interacts with CAVIN1. Interacts with CAVIN2; this augments the transactivation of NPPA. Interacts with CAV3, ADRA1A, ADRA1B, MAPK1 and MAPK3. Abundantly expressed in cardiac and skeletal muscle (at protein level). Weaker expression in aorta and lung. In heart, expressed in cardiomyocytes and vascular smooth muscle cells but not in other surrounding cells including vascular endothelial cells.

Its subcellular location is the cytoplasm. The protein localises to the myofibril. It localises to the sarcomere. It is found in the cytosol. The protein resides in the membrane. Its subcellular location is the caveola. The protein localises to the cell membrane. It localises to the sarcolemma. Its function is as follows. Modulates the morphology of formed caveolae in cardiomyocytes, but is not required for caveolar formation. Facilitates the recruitment of MAPK1/3 to caveolae within cardiomyocytes and regulates alpha-1 adrenergic receptor-induced hypertrophic responses in cardiomyocytes through MAPK1/3 activation. Contributes to proper membrane localization and stabilization of caveolin-3 (CAV3) in cardiomyocytes. Induces RHOA activation and activates NPPA transcription and myofibrillar organization through the Rho/ROCK signaling pathway. In Mus musculus (Mouse), this protein is Caveolae-associated protein 4 (Cavin4).